Consider the following 154-residue polypeptide: Transcription antitermination protein NusB (154 aa).

It belongs to the NusB family.

Its function is as follows. Involved in transcription antitermination. Required for transcription of ribosomal RNA (rRNA) genes. Binds specifically to the boxA antiterminator sequence of the ribosomal RNA (rrn) operons. The chain is Transcription antitermination protein NusB from Bordetella parapertussis (strain 12822 / ATCC BAA-587 / NCTC 13253).